Here is a 330-residue protein sequence, read N- to C-terminus: MGGLTISDLVVEYSSGGYAVRPIDGLSLDVAPGSLVILLGPSGCGKTTLLSCLGGILRPKSGSIKFDDVDITTLEGAALAKYRRDKVGIVFQAFNLVSSLTALENVMVPLRAAGVSRAAARKRAEDLLIRVNLGERMKHRPGDMSGGQQQRVAVARAIALDPQLILADEPTAHLDFIQVEEVLRLIRSLAQGDRVVVVATHDSRMLPLADRVLELMPAQVSPNQPPETVHVKAGEVLFEQSTMGDLIYVVSEGEFEIVRELADGGEELVKTAAPGDYFGEIGVLFHLPRSATVRARSDATAVGYTAQAFRERLGVTRVADLIEHRELASE.

Residues 4–242 (LTISDLVVEY…AGEVLFEQST (239 aa)) enclose the ABC transporter domain. Position 40–47 (40–47 (GPSGCGKT)) interacts with ATP. 210-330 (DRVLELMPAQ…LIEHRELASE (121 aa)) contacts a nucleoside 3',5'-cyclic phosphate.

This sequence belongs to the ABC transporter superfamily.

This is an uncharacterized protein from Mycobacterium bovis (strain ATCC BAA-935 / AF2122/97).